A 73-amino-acid chain; its full sequence is Large ribosomal subunit protein bL31 (73 aa).

This sequence belongs to the bacterial ribosomal protein bL31 family. Type A subfamily. As to quaternary structure, part of the 50S ribosomal subunit.

Functionally, binds the 23S rRNA. This Brucella abortus (strain 2308) protein is Large ribosomal subunit protein bL31.